The sequence spans 2476 residues: Zonadhesin (2476 aa).

The signal sequence occupies residues 1–29 (MLGLPALAGPMAMPHPPLIPSTPTLLAFS). Residues 30 to 2418 (FPGGFYMLLD…SPKKPEASNR (2389 aa)) lie on the Extracellular side of the membrane. 2 consecutive MAM domains span residues 31-144 (PGGF…PCEE) and 147-312 (PQCD…TCRG). Residues asparagine 109 and asparagine 269 are each glycosylated (N-linked (GlcNAc...) asparagine). Disordered regions lie at residues 313 to 332 (PSET…KPTV), 358 to 462 (PTVP…TERT), and 537 to 632 (ERTT…RTTI). The tract at residues 319-687 (STEKPVAPTE…ATTVTPRTTI (369 aa)) is 53 X approximate heptapeptide repeats (mucin-like domain). Low complexity predominate over residues 358-373 (PTVPTEKPTIPTEKST). Residues 400–412 (TTPPEGPAVPPKG) show a composition bias toward pro residues. Residues 423 to 433 (HTEKSTVHTEK) are compositionally biased toward basic and acidic residues. Low complexity predominate over residues 451–462 (PTKRTTTPTERT). Residues 690–739 (CPPNAHFERCACPVSCQSPTPNCELFCKPGCVCDPGFLFSGSHCVNASSC) enclose the TIL 1 domain. 3 N-linked (GlcNAc...) asparagine glycosylation sites follow: asparagine 735, asparagine 758, and asparagine 833. A VWFC 1 domain is found at 740-794 (DCFYNDNYYKLGTDWFSPNCTEHCHCRPSSRMECQTFKCGTHTVCQLKNGQYGCH). The region spanning 799 to 976 (ATCSVYGDPH…TSEDADQQCE (178 aa)) is the VWFD 1 domain. Disulfide bonds link cysteine 801–cysteine 936 and cysteine 823–cysteine 975. The segment at 943–983 (SSNDNQKPDGSPAKDEKELGSSWQTSEDADQQCEENQVSPP) is disordered. The TIL 2 domain occupies 1070–1123 (CPRNSRYTLCARLCPDTCHSEFSGRACKDRCVEGCECDPGFVLSGLQCVSRSEC). The region spanning 1124-1180 (GCLDSTAGYVKVGERWFKPGCRQLCICEGNNRTRCVLWRCQAQEFCGQQDGIYGCHA) is the VWFC 2 domain. The N-linked (GlcNAc...) asparagine glycan is linked to asparagine 1154. Residues 1184–1364 (ATCTVSGDPH…INELSEPGCF (181 aa)) enclose the VWFD 2 domain. Intrachain disulfides connect cysteine 1186–cysteine 1324 and cysteine 1208–cysteine 1363. Residues asparagine 1329 and asparagine 1448 are each glycosylated (N-linked (GlcNAc...) asparagine). The TIL 3 domain maps to 1456-1511 (CPSGSSYSTCANPCPATCLSLNNPSYCPSTLPCAEGCECQKGHILSGTSCVPLSQC). Positions 1512 to 1568 (GCTTQRGSYHPVGESWYTDNSCSRLCTCSAHNNISCRQASCKPSQMCWPQDGLIRCR) constitute a VWFC 3 domain. Residues asparagine 1544, asparagine 1596, and asparagine 1654 are each glycosylated (N-linked (GlcNAc...) asparagine). The 179-residue stretch at 1573–1751 (GVCRIPDTSH…RDKEIDPNCQ (179 aa)) folds into the VWFD 3 domain. 2 disulfides stabilise this stretch: cysteine 1575–cysteine 1712 and cysteine 1597–cysteine 1750. Over residues 1747 to 1759 (DPNCQEDDRKTEA) the composition is skewed to basic and acidic residues. A disordered region spans residues 1747–1768 (DPNCQEDDRKTEAESQEQPSAN). A glycan (N-linked (GlcNAc...) asparagine) is linked at asparagine 1843. Residues 1851-1907 (CSAHSVYTSCVPSCLPSCQDPEGQCTGAGAPSTCEEGCICEPGYVLSEQQCVARSQC) enclose the TIL 4 domain. Positions 1908 to 1963 (GCRDARGTFLPVGRFRLSSGCSQMCVCTAGAIECRPFTCPSGSQCEPNEDGKDFCQ) constitute a VWFC 4 domain. Asparagine 1965 carries N-linked (GlcNAc...) asparagine glycosylation. Residues 1968–2145 (NLCSVFGDPH…WEVKAKEGHP (178 aa)) form the VWFD 4 domain. A disulfide bridge connects residues cysteine 1970 and cysteine 2107. N-linked (GlcNAc...) asparagine glycans are attached at residues asparagine 2122, asparagine 2165, and asparagine 2178. In terms of domain architecture, TIL 5 spans 2257 to 2310 (CPANTVYQSCMTPCPASCATLAVPRACDGPCVEGCASLPGYIYSGAQSLPMAHC). A VWFC 5 domain is found at 2311 to 2365 (GCTNNGVYYQQGDSFVTENCSQRCTCASSGVLLCEPLSCRPGEICTLGNLTRGCF). Residues asparagine 2329 and asparagine 2359 are each glycosylated (N-linked (GlcNAc...) asparagine). The EGF-like domain occupies 2366-2402 (RDSPCLQNPCQNDGRCREQGTHFTCECELGYGGDLCT). Cystine bridges form between cysteine 2370–cysteine 2381, cysteine 2375–cysteine 2390, and cysteine 2392–cysteine 2401. A helical transmembrane segment spans residues 2419-2439 (VAILLGMLMPTVLLVPAVTRV). The segment at 2438–2476 (RVSRKRRRRRRPSRERTQSQNRGKRAGTDCAPEQAYKVA) is disordered. Positions 2439 to 2450 (VSRKRRRRRRPS) are enriched in basic residues. Topologically, residues 2440–2476 (SRKRRRRRRPSRERTQSQNRGKRAGTDCAPEQAYKVA) are cytoplasmic.

In terms of assembly, probably forms covalent oligomers. The MAM domains and the mucin-like domains are missing from the zonadhesin that binds to the egg extracellular matrix. Processing might occur during sperm maturation and/or capacitation. In terms of tissue distribution, in testis, primarily in haploid spermatids. Not in lung, liver, heart, spleen, brain, kidney, epididymis.

The protein resides in the cell membrane. Its function is as follows. Binds in a species-specific manner to the zona pellucida of the egg. May be involved in gamete recognition and/or signaling. The sequence is that of Zonadhesin (ZAN) from Sus scrofa (Pig).